A 189-amino-acid chain; its full sequence is Orcokinin peptides (189 aa).

A signal peptide spans 1–21 (MRGAGGALAVAVAALLVCCSA). Propeptides lie at residues 22-124 (DPHQ…TFVK) and 145-174 (FYHL…PIGS).

Belongs to the orcokinin family. As to expression, orcokinin-like peptide: Expressed in corpora cardiaca (CC), corpora allata (CA), antennal lobe (AL) and gnathal ganglion (GNG) (at protein level). Expression in CC, CA and GNG detected in some animals, in AL in few animals (at protein level). Orcokinin-like peptide precursor-related peptide: Expressed in corpora cardiaca (CC), corpora allata (CA), antennal lobe (AL) and gnathal ganglion (GNG) (at protein level). Expression in GNG detected in most animals, expression in CC, CA and AL detected in some animals (at protein level).

It localises to the secreted. In terms of biological role, myotropic peptides. This Agrotis ipsilon (Black cutworm moth) protein is Orcokinin peptides.